Here is a 118-residue protein sequence, read N- to C-terminus: Mitochondrial protein YPR099C (118 aa).

The protein localises to the mitochondrion. Functionally, essential for the functional mitochondria and respiratory growth. The chain is Mitochondrial protein YPR099C from Saccharomyces cerevisiae (strain ATCC 204508 / S288c) (Baker's yeast).